The sequence spans 171 residues: 3-hydroxydecanoyl-[acyl-carrier-protein] dehydratase (171 aa).

H70 is an active-site residue.

It belongs to the thioester dehydratase family. FabA subfamily. As to quaternary structure, homodimer.

It is found in the cytoplasm. It catalyses the reaction a (3R)-hydroxyacyl-[ACP] = a (2E)-enoyl-[ACP] + H2O. The enzyme catalyses (3R)-hydroxydecanoyl-[ACP] = (2E)-decenoyl-[ACP] + H2O. The catalysed reaction is (2E)-decenoyl-[ACP] = (3Z)-decenoyl-[ACP]. Its pathway is lipid metabolism; fatty acid biosynthesis. Its function is as follows. Necessary for the introduction of cis unsaturation into fatty acids. Catalyzes the dehydration of (3R)-3-hydroxydecanoyl-ACP to E-(2)-decenoyl-ACP and then its isomerization to Z-(3)-decenoyl-ACP. Can catalyze the dehydratase reaction for beta-hydroxyacyl-ACPs with saturated chain lengths up to 16:0, being most active on intermediate chain length. In Ectopseudomonas mendocina (strain ymp) (Pseudomonas mendocina), this protein is 3-hydroxydecanoyl-[acyl-carrier-protein] dehydratase.